The following is a 192-amino-acid chain: Protein GrpE (192 aa).

The tract at residues 1 to 43 (MSKEEFPHEKDLKDEVTPDKAPKKDPKAASKEEVKEDPAKDYE) is disordered.

It belongs to the GrpE family. In terms of assembly, homodimer.

The protein resides in the cytoplasm. Participates actively in the response to hyperosmotic and heat shock by preventing the aggregation of stress-denatured proteins, in association with DnaK and GrpE. It is the nucleotide exchange factor for DnaK and may function as a thermosensor. Unfolded proteins bind initially to DnaJ; upon interaction with the DnaJ-bound protein, DnaK hydrolyzes its bound ATP, resulting in the formation of a stable complex. GrpE releases ADP from DnaK; ATP binding to DnaK triggers the release of the substrate protein, thus completing the reaction cycle. Several rounds of ATP-dependent interactions between DnaJ, DnaK and GrpE are required for fully efficient folding. This chain is Protein GrpE, found in Lactobacillus gasseri (strain ATCC 33323 / DSM 20243 / BCRC 14619 / CIP 102991 / JCM 1131 / KCTC 3163 / NCIMB 11718 / NCTC 13722 / AM63).